Consider the following 112-residue polypeptide: Putative pterin-4-alpha-carbinolamine dehydratase (112 aa).

Belongs to the pterin-4-alpha-carbinolamine dehydratase family.

The enzyme catalyses (4aS,6R)-4a-hydroxy-L-erythro-5,6,7,8-tetrahydrobiopterin = (6R)-L-erythro-6,7-dihydrobiopterin + H2O. The chain is Putative pterin-4-alpha-carbinolamine dehydratase from Shewanella piezotolerans (strain WP3 / JCM 13877).